We begin with the raw amino-acid sequence, 442 residues long: Hydroxycinnamoyltransferase 1 (442 aa).

Catalysis depends on proton acceptor residues His-159 and Asp-389.

Belongs to the plant acyltransferase family. As to expression, expressed in roots, leaves, stems and seeds.

Its function is as follows. Hydroxycinnamoyl transferase that catalyzes the transfer of an acyl from p-coumaryol-CoA to various acyl acceptors. Can use feruloyl-CoA and caffeoyl-CoA as acyl donors. This is Hydroxycinnamoyltransferase 1 from Oryza sativa subsp. japonica (Rice).